Consider the following 396-residue polypeptide: Cystathionine beta-lyase (396 aa).

The residue at position 214 (Lys214) is an N6-(pyridoxal phosphate)lysine.

Belongs to the trans-sulfuration enzymes family. In terms of assembly, homodimer. The cofactor is pyridoxal 5'-phosphate.

Its subcellular location is the cytoplasm. It catalyses the reaction L,L-cystathionine + H2O = L-homocysteine + pyruvate + NH4(+). It carries out the reaction an S-substituted L-cysteine + H2O = a thiol + pyruvate + NH4(+). Its pathway is amino-acid biosynthesis; L-methionine biosynthesis via de novo pathway; L-homocysteine from L-cystathionine: step 1/1. Its function is as follows. Catalyzes the cleavage of cystathionine to homocysteine, pyruvate and ammonia during methionine biosynthesis. Also has cytotoxic activity toward osteogenic, osteosarcoma and tracheal cells, in vitro. The chemical basis for cell toxicity might be the formation and subsequent transfer of sulfane-sulfur to proteins, derived via beta-cystathionase cleavage of L-cystine. The chain is Cystathionine beta-lyase (metC) from Bordetella avium.